The primary structure comprises 159 residues: Nudix hydrolase DR_1025 (159 aa).

Methionine 1, arginine 14, and serine 49 together coordinate Mg(2+). 1–6 (MEHDER) lines the ATP pocket. A Nudix hydrolase domain is found at 11 to 144 (VELRAAGVVL…QIRMYQTKLF (134 aa)). Residue 50 to 51 (GA) coordinates ATP. The short motif at 50–71 (GAVEDGENPQDAAVREACEETG) is the Nudix box element. Mg(2+) contacts are provided by glutamate 53 and glutamate 65. 87 to 89 (FPD) lines the ATP pocket. Arginine 95 provides a ligand contact to Mg(2+).

It belongs to the Nudix hydrolase family. In terms of assembly, homodimer. It depends on Mg(2+) as a cofactor.

It catalyses the reaction 8-oxo-dGTP + H2O = 8-oxo-dGDP + phosphate + H(+). It carries out the reaction 8-oxo-GTP + H2O = 8-oxo-GDP + phosphate + H(+). The catalysed reaction is P(1),P(4)-bis(5'-adenosyl) tetraphosphate + H2O = AMP + ATP + 2 H(+). In terms of biological role, hydrolase that can act as a nucleoside triphosphatase and a dinucleoside polyphosphate pyrophosphatase. The best substrates are 8-oxo-dGTP and 8-oxo-GTP. Other substrates include Ap4A, dGTP and GTP. May be involved in protection from damage caused by radiation. This Deinococcus radiodurans (strain ATCC 13939 / DSM 20539 / JCM 16871 / CCUG 27074 / LMG 4051 / NBRC 15346 / NCIMB 9279 / VKM B-1422 / R1) protein is Nudix hydrolase DR_1025.